The following is a 340-amino-acid chain: Biotin synthase (340 aa).

In terms of domain architecture, Radical SAM core spans 45-272 (NAVQVSTLLS…ASYVRLSAGR (228 aa)). 3 residues coordinate [4Fe-4S] cluster: C60, C64, and C67. [2Fe-2S] cluster is bound by residues C104, C135, C195, and R267.

This sequence belongs to the radical SAM superfamily. Biotin synthase family. In terms of assembly, homodimer. Requires [4Fe-4S] cluster as cofactor. The cofactor is [2Fe-2S] cluster.

The catalysed reaction is (4R,5S)-dethiobiotin + (sulfur carrier)-SH + 2 reduced [2Fe-2S]-[ferredoxin] + 2 S-adenosyl-L-methionine = (sulfur carrier)-H + biotin + 2 5'-deoxyadenosine + 2 L-methionine + 2 oxidized [2Fe-2S]-[ferredoxin]. It functions in the pathway cofactor biosynthesis; biotin biosynthesis; biotin from 7,8-diaminononanoate: step 2/2. Its function is as follows. Catalyzes the conversion of dethiobiotin (DTB) to biotin by the insertion of a sulfur atom into dethiobiotin via a radical-based mechanism. The sequence is that of Biotin synthase from Thioalkalivibrio sulfidiphilus (strain HL-EbGR7).